The chain runs to 351 residues: Dihydroorotate dehydrogenase (quinone) (351 aa).

Residues 67-71 (AGFDK) and Thr91 each bind FMN. Lys71 serves as a coordination point for substrate. Position 116–120 (116–120 (NAMGF)) interacts with substrate. FMN-binding residues include Asn145 and Asn178. A substrate-binding site is contributed by Asn178. Catalysis depends on Ser181, which acts as the Nucleophile. Asn183 contributes to the substrate binding site. The FMN site is built by Lys214 and Thr242. 243–244 (NT) lines the substrate pocket. Residues Gly262, Gly291, and 312 to 313 (YS) contribute to the FMN site.

This sequence belongs to the dihydroorotate dehydrogenase family. Type 2 subfamily. Monomer. FMN is required as a cofactor.

The protein localises to the cell membrane. The catalysed reaction is (S)-dihydroorotate + a quinone = orotate + a quinol. The protein operates within pyrimidine metabolism; UMP biosynthesis via de novo pathway; orotate from (S)-dihydroorotate (quinone route): step 1/1. Its function is as follows. Catalyzes the conversion of dihydroorotate to orotate with quinone as electron acceptor. The sequence is that of Dihydroorotate dehydrogenase (quinone) (pyrD) from Helicobacter pylori (strain ATCC 700392 / 26695) (Campylobacter pylori).